The sequence spans 189 residues: Probable DNA-directed RNA polymerase subunit delta (189 aa).

An HTH HARE-type domain is found at 14 to 81 (LSMIEVAHAI…GENVWALRTW (68 aa)). 2 stretches are compositionally biased toward acidic residues: residues 90 to 100 (EVDHPEDDGDE) and 118 to 189 (EGDD…EDEE). The interval 90–189 (EVDHPEDDGD…DDLDDDEDEE (100 aa)) is disordered.

Belongs to the RpoE family. As to quaternary structure, RNAP is composed of a core of 2 alpha, a beta and a beta' subunits. The core is associated with a delta subunit and one of several sigma factors.

Participates in both the initiation and recycling phases of transcription. In the presence of the delta subunit, RNAP displays an increased specificity of transcription, a decreased affinity for nucleic acids, and an increased efficiency of RNA synthesis because of enhanced recycling. This is Probable DNA-directed RNA polymerase subunit delta from Lactobacillus delbrueckii subsp. bulgaricus (strain ATCC 11842 / DSM 20081 / BCRC 10696 / JCM 1002 / NBRC 13953 / NCIMB 11778 / NCTC 12712 / WDCM 00102 / Lb 14).